A 142-amino-acid polypeptide reads, in one-letter code: MRSPGEVLREGELEKRSDSLLQVWKKKRGVLTTDRLRLFPTGPGARPKELRFHSILKVDCVERTGKYVYFTIVTTDRKEIDFRCAGESYWNASITLALIDFQNRRAMQDFRSRRERAAAAAAAAAAAAAAEQEPEAGPGGQP.

The residue at position 3 (Ser-3) is a Phosphoserine. A PH domain is found at 7–99 (VLREGELEKR…WNASITLALI (93 aa)).

The protein belongs to the PHLDA2 family.

It localises to the cytoplasm. The protein localises to the membrane. Its function is as follows. Plays a role in regulating placenta growth. May act via its PH domain that competes with other PH domain-containing proteins, thereby preventing their binding to membrane lipids. In Bos taurus (Bovine), this protein is Pleckstrin homology-like domain family A member 2 (PHLDA2).